The chain runs to 155 residues: Ribosome maturation factor RimP (155 aa).

It belongs to the RimP family.

Its subcellular location is the cytoplasm. Its function is as follows. Required for maturation of 30S ribosomal subunits. The protein is Ribosome maturation factor RimP of Prochlorococcus marinus (strain MIT 9301).